Here is a 269-residue protein sequence, read N- to C-terminus: Hydroxyethylthiazole kinase (269 aa).

Met-48 lines the substrate pocket. The ATP site is built by Lys-124 and Thr-170. Residue Gly-197 participates in substrate binding.

The protein belongs to the Thz kinase family. Mg(2+) serves as cofactor.

It carries out the reaction 5-(2-hydroxyethyl)-4-methylthiazole + ATP = 4-methyl-5-(2-phosphooxyethyl)-thiazole + ADP + H(+). Its pathway is cofactor biosynthesis; thiamine diphosphate biosynthesis; 4-methyl-5-(2-phosphoethyl)-thiazole from 5-(2-hydroxyethyl)-4-methylthiazole: step 1/1. Its function is as follows. Catalyzes the phosphorylation of the hydroxyl group of 4-methyl-5-beta-hydroxyethylthiazole (THZ). In Clostridium kluyveri (strain NBRC 12016), this protein is Hydroxyethylthiazole kinase.